Here is a 412-residue protein sequence, read N- to C-terminus: Multifunctional CCA protein (412 aa).

The ATP site is built by Gly-8 and Arg-11. Gly-8 and Arg-11 together coordinate CTP. 2 residues coordinate Mg(2+): Asp-21 and Asp-23. Residues Arg-91, Arg-137, and Arg-140 each contribute to the ATP site. Arg-91, Arg-137, and Arg-140 together coordinate CTP. Positions Thr-228–Trp-329 constitute an HD domain.

It belongs to the tRNA nucleotidyltransferase/poly(A) polymerase family. Bacterial CCA-adding enzyme type 1 subfamily. In terms of assembly, monomer. Can also form homodimers and oligomers. Mg(2+) is required as a cofactor. Ni(2+) serves as cofactor.

It carries out the reaction a tRNA precursor + 2 CTP + ATP = a tRNA with a 3' CCA end + 3 diphosphate. The enzyme catalyses a tRNA with a 3' CCA end + 2 CTP + ATP = a tRNA with a 3' CCACCA end + 3 diphosphate. Its function is as follows. Catalyzes the addition and repair of the essential 3'-terminal CCA sequence in tRNAs without using a nucleic acid template. Adds these three nucleotides in the order of C, C, and A to the tRNA nucleotide-73, using CTP and ATP as substrates and producing inorganic pyrophosphate. tRNA 3'-terminal CCA addition is required both for tRNA processing and repair. Also involved in tRNA surveillance by mediating tandem CCA addition to generate a CCACCA at the 3' terminus of unstable tRNAs. While stable tRNAs receive only 3'-terminal CCA, unstable tRNAs are marked with CCACCA and rapidly degraded. The protein is Multifunctional CCA protein of Shigella flexneri serotype 5b (strain 8401).